A 428-amino-acid chain; its full sequence is Glutamyl-tRNA reductase (428 aa).

Substrate contacts are provided by residues 49–52 (TCNR), Ser-109, 114–116 (EGQ), and Gln-120. The active-site Nucleophile is Cys-50. Residue 189–194 (GAGKMS) coordinates NADP(+).

This sequence belongs to the glutamyl-tRNA reductase family. Homodimer.

The catalysed reaction is (S)-4-amino-5-oxopentanoate + tRNA(Glu) + NADP(+) = L-glutamyl-tRNA(Glu) + NADPH + H(+). It participates in porphyrin-containing compound metabolism; protoporphyrin-IX biosynthesis; 5-aminolevulinate from L-glutamyl-tRNA(Glu): step 1/2. The protein operates within porphyrin-containing compound metabolism; chlorophyll biosynthesis. Functionally, catalyzes the NADPH-dependent reduction of glutamyl-tRNA(Glu) to glutamate 1-semialdehyde (GSA). The polypeptide is Glutamyl-tRNA reductase (Gloeothece citriformis (strain PCC 7424) (Cyanothece sp. (strain PCC 7424))).